An 831-amino-acid polypeptide reads, in one-letter code: MTLSRRDFIKQTAVAATASVAGVTLPAGAANFVTDSEVTKLKWSKAPCRFCGTGCGVTVAVRDNKVVATNGDPQAEVNKGLNCVKGYFLSKIMYGQDRLTKPLLRMKNGQYDKNGEFAPVTWERAFDEMERQFKRVLKEKGPTAVGMFGSGQWTVWEGYAASKLYKAGFRSNNIDPNARHCMASAVQGFMRTFGMDEPMGCYDDFEAADAFVLWGSNMAEMHPILWTRITDRRLSHPKTRVAVLSTFTHRSFDLADIPVIFKPQTDLAMMNYIAHYIIKNNKVNKDFVNKHTVFKEGVTNIGYGLRPDHPLQKAAKNAADPGASRPITFDDFARFVAKYDADTVSKLSGVPKDKLDQLAELYADTNIKVMSLWTMGFNQHTRGSWANNMVYNLHLLTGKIATPGNSPFSLTGQPSACGTAREVGTFSHRLPADMVVTNPKHREEAERIWKLPPGTIPDKPGYHAVLQNRMLKDGKLNAYWVQVNNNMQAAANLMEEGLPGYRNPANFIVVSDAYPTVTALAADLILPSAMWVEKEGAYGNAERRTQFWHQLVDAPGEARSDLWQLMEFSKRFKVEDVWPADLIAKKPEYRGKTLFDVLYRNGQVDKFPLKEVNAEYHNAEAKAFGFYVQKGLFEEYATFGRGHGHDLAPFDAYHEARGLRWPVVNGKETRWRYREGSDPYVKAGTGYQFYGNPDGKAVIFALPYEPPAESPDKEYPYWLVTGRVLEHWHSGSMTRRVPELYRAFPNAVVFMHPEDAKAMGLRRGVEVEVVSRRGSMRSRLETRGRDAPPRGLVFVPWFDASQLINKVTLDATCPISLQTDFKKCAVKIVKV.

Positions 1–29 (MTLSRRDFIKQTAVAATASVAGVTLPAGA) form a signal peptide, tat-type signal. The 4Fe-4S Mo/W bis-MGD-type domain maps to 41 to 97 (LKWSKAPCRFCGTGCGVTVAVRDNKVVATNGDPQAEVNKGLNCVKGYFLSKIMYGQD). Residues Cys-48, Cys-51, Cys-55, and Cys-83 each contribute to the [4Fe-4S] cluster site. Residues Lys-85, Gln-152, Asn-177, Cys-181, 214–221 (WGSNMAEM), 245–249 (STFTH), 264–266 (QTD), Met-375, Gln-379, Asn-485, 511–512 (SD), Lys-534, Asp-561, and 721–730 (TGRVLEHWHS) each bind Mo-bis(molybdopterin guanine dinucleotide). Residue Trp-797 coordinates substrate. Asn-805 and Lys-822 together coordinate Mo-bis(molybdopterin guanine dinucleotide).

This sequence belongs to the prokaryotic molybdopterin-containing oxidoreductase family. NasA/NapA/NarB subfamily. Component of the periplasmic nitrate reductase NapAB complex composed of NapA and NapB. [4Fe-4S] cluster is required as a cofactor. The cofactor is Mo-bis(molybdopterin guanine dinucleotide). Post-translationally, predicted to be exported by the Tat system. The position of the signal peptide cleavage has not been experimentally proven.

Its subcellular location is the periplasm. The catalysed reaction is 2 Fe(II)-[cytochrome] + nitrate + 2 H(+) = 2 Fe(III)-[cytochrome] + nitrite + H2O. Catalytic subunit of the periplasmic nitrate reductase complex NapAB. Receives electrons from NapB and catalyzes the reduction of nitrate to nitrite. The sequence is that of Periplasmic nitrate reductase from Cupriavidus taiwanensis (strain DSM 17343 / BCRC 17206 / CCUG 44338 / CIP 107171 / LMG 19424 / R1) (Ralstonia taiwanensis (strain LMG 19424)).